A 389-amino-acid polypeptide reads, in one-letter code: Chalcone synthase 1A (389 aa).

Residue Cys-164 is part of the active site.

This sequence belongs to the thiolase-like superfamily. Chalcone/stilbene synthases family.

The catalysed reaction is (E)-4-coumaroyl-CoA + 3 malonyl-CoA + 3 H(+) = 2',4,4',6'-tetrahydroxychalcone + 3 CO2 + 4 CoA. The protein operates within secondary metabolite biosynthesis; flavonoid biosynthesis. The primary product of this enzyme is 4,2',4',6'-tetrahydroxychalcone (also termed naringenin-chalcone or chalcone) which can under specific conditions spontaneously isomerize into naringenin. The polypeptide is Chalcone synthase 1A (CHS1A) (Solanum tuberosum (Potato)).